The sequence spans 763 residues: MSELLSVALFLASVLIYAWKAGRNTWWFAATLTVLGLFVILNITLYASDYFTGDGINDAVLYTLTNSLTGAGVGKYILPGIGIALALVAVFGALGWVLRRRRHHPHHVGYSLLALLLALGSVDASPAFRQITELVKSQMRDGDPDFAVYYKEPAKTIPNPKLNLVYIYGESLERTYFDNDAFPNLTPELGALKNEGLDFSHTMQLPGTDYTIAGMVASQCGIPLFAPFEGNASASVSSFFPQNICLGDILKNSGYQNYFVQGANLRFAGKDVFLKSHGFDHLYGAEELKTVVADPSYRNDWGFYDDTVLDEAWKKFEALSRSGQRFSLFTLTVDTHHPDGFISRTCNRKRYDYDGKPNQSFSAVSCSQENIAEFINKIKASPWFKDTVIVVSSDHLAMNNTAWKYLNKQDRNNLFFILRGDKPQQETLAVKRNTMDNGATVLDILGGDNFIGLGRSSLSGQSLSEVFLNVKEKVLAMKPDIIRLWNFPKEIKDFTVDRDKNMIAFSGSHFRLPLLLRVSDKRVEPLPESEYSAPLRFQLADFAPRDNFVWIDRCYKMAQLWAPALALSTDWCVSQGQLGGQQTVQHVDKAQWQGKTAFKDTMIDMERYKGNVDTLKIVDNDIRYKADSFIFNVAGAPEEVKQFSGISRPESWGRWSNAQLGDEVKIEYKAPLPKKFDLVITAKAFGDNANRPIPVRVGNEEQTLVLGHDVSTITLHFNNPTDANTLVIAPPAPVSTNEGNILGHSPRKLGIGMVEIKVVNVEG.

The next 4 membrane-spanning stretches (helical) occupy residues 1–21, 26–46, 77–97, and 108–128; these read MSELLSVALFLASVLIYAWKA, WWFAATLTVLGLFVILNITLY, ILPGIGIALALVAVFGALGWV, and VGYSLLALLLALGSVDASPAF.

The protein belongs to the OpgB family.

The protein resides in the cell inner membrane. The catalysed reaction is a phosphatidylglycerol + a membrane-derived-oligosaccharide D-glucose = a 1,2-diacyl-sn-glycerol + a membrane-derived-oligosaccharide 6-(glycerophospho)-D-glucose.. Its pathway is glycan metabolism; osmoregulated periplasmic glucan (OPG) biosynthesis. In terms of biological role, transfers a phosphoglycerol residue from phosphatidylglycerol to the membrane-bound nascent glucan backbones. This Salmonella schwarzengrund (strain CVM19633) protein is Phosphoglycerol transferase I.